The primary structure comprises 167 residues: Shikimate kinase (167 aa).

Residue 8 to 15 coordinates ATP; it reads GFMGSGKT.

The protein belongs to the shikimate kinase family.

It is found in the cytoplasm. The enzyme catalyses shikimate + ATP = 3-phosphoshikimate + ADP + H(+). It participates in metabolic intermediate biosynthesis; chorismate biosynthesis; chorismate from D-erythrose 4-phosphate and phosphoenolpyruvate: step 5/7. The protein is Shikimate kinase of Helicobacter hepaticus (strain ATCC 51449 / 3B1).